We begin with the raw amino-acid sequence, 47 residues long: Defensin-like protein 2 (47 aa).

Intrachain disulfides connect Cys5-Cys47, Cys16-Cys36, Cys22-Cys43, and Cys26-Cys45.

The protein belongs to the DEFL family.

Functionally, fabatins have antibacterial activity against Gram-positive and Gram-negative bacteria. High activity against P.aeruginosa. No activity against S.cerevisiae and C.albicans. The chain is Defensin-like protein 2 from Vicia faba (Broad bean).